Reading from the N-terminus, the 258-residue chain is MRLSSSPPRGPQQLSSFGSVDWLSQSSCSGPTHTPRPADFSLGSLPGPGQTSGAREPPQAVSIKEAAGSSNLPAPERTMAGLSKEPNTLRAPRVRTAFTMEQVRTLEGVFQHHQYLSPLERKRLAREMQLSEVQIKTWFQNRRMKHKRQMQDPQLHSPFSGSLHAPPAFYSTSSGLANGLQLLCPWAPLSGPQALMLPPGSFWGLCQVAQEALASAGASCCGQPLASHPPTPGRPSLGPALSTGPRGLCAMPQTGDAF.

Residues 1–32 (MRLSSSPPRGPQQLSSFGSVDWLSQSSCSGPT) show a composition bias toward polar residues. Disordered stretches follow at residues 1–93 (MRLS…RAPR) and 227–248 (SHPP…PRGL). The homeobox DNA-binding region spans 91 to 150 (APRVRTAFTMEQVRTLEGVFQHHQYLSPLERKRLAREMQLSEVQIKTWFQNRRMKHKRQM).

As to expression, expressed in bone marrow of patients recovering from chemotherapy. Also expressed in an erythroleukemia cell line.

Its subcellular location is the nucleus. Its function is as follows. May be involved in ventralization. In Homo sapiens (Human), this protein is Homeobox protein VENTX (VENTX).